Reading from the N-terminus, the 218-residue chain is MGQKINPLGFRLGENQSHHSLWFAQPKSYCRGLQEDEKIRDCIKIYVQKNMRISSGFEGIAHIEIQKKMDLIQVIISIGFPNFLIEGGTRGIEELQMNVQKRFHSANRRLNIAITRVAKPYGQPNILAEYIARQLKNRVSFRKAMKKVIELTEQADTKGIQVQIAGRIDGKEIARVEWIREGRVPLQTIRAKIDHCSYTVRTIYGVLGIKIWIFVDEQ.

The KH type-2 domain occupies 47–118 (VQKNMRISSG…RLNIAITRVA (72 aa)).

This sequence belongs to the universal ribosomal protein uS3 family. In terms of assembly, part of the 30S ribosomal subunit.

It is found in the plastid. Its subcellular location is the chloroplast. This chain is Small ribosomal subunit protein uS3c (rps3), found in Calycanthus floridus var. glaucus (Eastern sweetshrub).